The sequence spans 403 residues: RILP-like protein 1 (403 aa).

Serine 7 carries the post-translational modification Phosphoserine. The RH1 domain maps to 10-97 (AAESALEKNV…RLERMDRIEK (88 aa)). Cysteine 47 is subject to S-nitrosocysteine. Residues 76 to 258 (ELDELRLELD…KLRERLQGEH (183 aa)) are a coiled coil. 3 disordered regions span residues 254–275 (LQGE…GEES), 327–352 (EMEE…PESG), and 384–403 (ANTH…LQHL). Serine 259 is subject to Phosphoserine. Residues 262 to 275 (GEEEPETEPVGEES) are compositionally biased toward acidic residues. An RH2 domain is found at 291–356 (RPRFTLQELR…PQPESGIKRL (66 aa)). A compositionally biased stretch (polar residues) spans 394 to 403 (EQGQEALQHL).

This sequence belongs to the RILPL family. As to quaternary structure, interacts (when S-nitrosylated) with GAPDH. Interacts with RAB8A; interaction is dependent on the phosphorylation of 'Thr-72' of RAB8A. Interacts with RAB10 and RAB12; the interaction is dependent on the phosphorylation of 'Thr-73' of RAB10, and 'Ser-105' of RAB12. In terms of processing, S-nitrosylation is required for the interaction with GAPDH. Widely expressed. Expressed at lower level in liver and kidney.

Its subcellular location is the cytoplasm. It localises to the cytosol. The protein localises to the cytoskeleton. It is found in the microtubule organizing center. The protein resides in the centrosome. Its subcellular location is the centriole. It localises to the cilium basal body. In terms of biological role, plays a role in the regulation of cell shape and polarity. Plays a role in cellular protein transport, including protein transport away from primary cilia. Neuroprotective protein, which acts by sequestring GAPDH in the cytosol and prevent the apoptotic function of GAPDH in the nucleus. Competes with SIAH1 for binding GAPDH. Does not regulate lysosomal morphology and distribution. Binds to RAB10 following LRRK2-mediated RAB10 phosphorylation which leads to inhibition of ciliogenesis. The sequence is that of RILP-like protein 1 (RILPL1) from Homo sapiens (Human).